Reading from the N-terminus, the 241-residue chain is MPILVVNVDHVATLRQQRLGIEPDPVTAAHMAELAGARGIIVHLREDRRHIQDRDVSLLRQTLKTRLHLEMAATEEMQGIALAEKPHMVCLVPEKREELTTEGGLVVAGRVDFLQAYVKPFHEIGIATSLFIEADPDQIRAAARVGVTHVELHTGHFADAPDAAERKRQRDAIVAGIGLARTLGLKVNLGHGLNYDNIFDFEAVPGICEFSIGHSIVSRAVLTGFGPAVRDMVDIINRFPG.

Asn7 provides a ligand contact to 3-amino-2-oxopropyl phosphate. Position 9–10 (9–10 (DH)) interacts with 1-deoxy-D-xylulose 5-phosphate. Arg18 contacts 3-amino-2-oxopropyl phosphate. His43 functions as the Proton acceptor in the catalytic mechanism. 2 residues coordinate 1-deoxy-D-xylulose 5-phosphate: Arg45 and His50. Catalysis depends on Glu70, which acts as the Proton acceptor. Thr100 is a binding site for 1-deoxy-D-xylulose 5-phosphate. Catalysis depends on His191, which acts as the Proton donor. Residues Gly192 and 213-214 (GH) each bind 3-amino-2-oxopropyl phosphate.

Belongs to the PNP synthase family. In terms of assembly, homooctamer; tetramer of dimers.

The protein localises to the cytoplasm. It catalyses the reaction 3-amino-2-oxopropyl phosphate + 1-deoxy-D-xylulose 5-phosphate = pyridoxine 5'-phosphate + phosphate + 2 H2O + H(+). The protein operates within cofactor biosynthesis; pyridoxine 5'-phosphate biosynthesis; pyridoxine 5'-phosphate from D-erythrose 4-phosphate: step 5/5. Functionally, catalyzes the complicated ring closure reaction between the two acyclic compounds 1-deoxy-D-xylulose-5-phosphate (DXP) and 3-amino-2-oxopropyl phosphate (1-amino-acetone-3-phosphate or AAP) to form pyridoxine 5'-phosphate (PNP) and inorganic phosphate. The chain is Pyridoxine 5'-phosphate synthase from Nitratidesulfovibrio vulgaris (strain ATCC 29579 / DSM 644 / CCUG 34227 / NCIMB 8303 / VKM B-1760 / Hildenborough) (Desulfovibrio vulgaris).